The sequence spans 116 residues: Cysteine-rich venom protein Cau1 (116 aa).

Positions 4–42 (SYAVVGHYTQIVWYKSDRIGCAAAYCPSSVYNYFYVCQY) constitute an SCP domain. 5 disulfides stabilise this stretch: Cys24–Cys40, Cys62–Cys69, Cys65–Cys74, Cys87–Cys105, and Cys96–Cys109. The region spanning 78 to 111 (CRVEDEFINCKDMAESRDCQDNYMMTNCAAFCSC) is the ShKT domain.

This sequence belongs to the CRISP family. In terms of tissue distribution, expressed by the venom gland.

The protein resides in the secreted. Blocks contraction of smooth muscle elicited by high potassium-induced depolarization, but does not block caffeine-stimulated contraction. May target voltage-gated calcium channels on smooth muscle. This chain is Cysteine-rich venom protein Cau1, found in Causus rhombeatus (Rhombic night adder).